We begin with the raw amino-acid sequence, 137 residues long: Pro-corazonin (137 aa).

The first 20 residues, 1 to 20 (MKHVFSTSLIVSLFVIFTDA), serve as a signal peptide directing secretion. The residue at position 21 (Q21) is a Pyrrolidone carboxylic acid. Residue N31 is modified to Asparagine amide. Residues 68 to 137 (FLKSPCDVRL…RLLNDGMHRL (70 aa)) constitute a propeptide that is removed on maturation.

This sequence belongs to the corazonin family.

It is found in the secreted. In terms of biological role, cardioactive peptide. Corazonin is probably involved in the physiological regulation of the heart beat. This Aedes aegypti (Yellowfever mosquito) protein is Pro-corazonin.